A 239-amino-acid chain; its full sequence is Major prion protein (239 aa).

An N-terminal signal peptide occupies residues 1–15; sequence MLVLFVATWSDLGLC. The tract at residues 15–98 is disordered; it reads CKKRPKPGGW…NQWNKPSKPK (84 aa). The tract at residues 16-31 is interaction with ADGRG6; sequence KKRPKPGGWNTGGSRY. Positions 16-222 are interaction with GRB2, ERI3 and SYN1; sequence KKRPKPGGWN…ESQAYYQRGS (207 aa). 5 consecutive repeat copies span residues 44 to 51, 52 to 59, 60 to 67, 68 to 75, and 76 to 83. The segment at 44–83 is 5 X 8 AA tandem repeats of P-H-G-G-G-W-G-Q; the sequence is PQSGGWGQPHGGGWGQPHGGGWGQPHGGGWGQPHGGGWGQ. Positions 47-87 are enriched in gly residues; that stretch reads GGWGQPHGGGWGQPHGGGWGQPHGGGWGQPHGGGWGQGGGT. The Cu(2+) site is built by histidine 53, glycine 54, glycine 55, histidine 61, glycine 62, glycine 63, histidine 69, glycine 70, glycine 71, histidine 77, glycine 78, and glycine 79. Cysteine 171 and cysteine 206 are joined by a disulfide. Asparagine 173 and asparagine 189 each carry an N-linked (GlcNAc...) asparagine glycan. Serine 222 carries the GPI-anchor amidated serine lipid modification. The propeptide at 223–239 is removed in mature form; the sequence is SMVLFSSPPVILLISFL.

The protein belongs to the prion family. As to quaternary structure, monomer and homodimer. Has a tendency to aggregate into amyloid fibrils containing a cross-beta spine, formed by a steric zipper of superposed beta-strands. Soluble oligomers may represent an intermediate stage on the path to fibril formation. Copper binding may promote oligomerization. Interacts with GRB2, APP, ERI3/PRNPIP and SYN1. Mislocalized cytosolically exposed PrP interacts with MGRN1; this interaction alters MGRN1 subcellular location and causes lysosomal enlargement. Interacts with APP. Interacts with KIAA1191. Interacts with ADGRG6.

The protein resides in the cell membrane. Its subcellular location is the golgi apparatus. Functionally, its primary physiological function is unclear. May play a role in neuronal development and synaptic plasticity. May be required for neuronal myelin sheath maintenance. May promote myelin homeostasis through acting as an agonist for ADGRG6 receptor. May play a role in iron uptake and iron homeostasis. Soluble oligomers are toxic to cultured neuroblastoma cells and induce apoptosis (in vitro). Association with GPC1 (via its heparan sulfate chains) targets PRNP to lipid rafts. Also provides Cu(2+) or Zn(2+) for the ascorbate-mediated GPC1 deaminase degradation of its heparan sulfate side chains. The sequence is that of Major prion protein (PRNP) from Aotus trivirgatus (Three-striped night monkey).